The sequence spans 324 residues: Probable cell division protein WhiA (324 aa).

Positions 275-308 form a DNA-binding region, H-T-H motif; the sequence is SLEELGALADPPLTKDAIAGRIRRLIAMADRRAD.

The protein belongs to the WhiA family.

Functionally, involved in cell division and chromosome segregation. This Acidothermus cellulolyticus (strain ATCC 43068 / DSM 8971 / 11B) protein is Probable cell division protein WhiA.